The primary structure comprises 800 residues: Ribosome-releasing factor 2, mitochondrial (800 aa).

In terms of domain architecture, tr-type G spans 21–307 (SKVRNIGIIA…AIANYLPSPS (287 aa)). GTP contacts are provided by residues 30-37 (AHIDAGKT), 95-99 (DTPGH), and 147-150 (NKMD).

Belongs to the TRAFAC class translation factor GTPase superfamily. Classic translation factor GTPase family. EF-G/EF-2 subfamily.

The protein localises to the mitochondrion. Mitochondrial GTPase that mediates the disassembly of ribosomes from messenger RNA at the termination of mitochondrial protein biosynthesis. Not involved in the GTP-dependent ribosomal translocation step during translation elongation. The chain is Ribosome-releasing factor 2, mitochondrial from Kluyveromyces lactis (strain ATCC 8585 / CBS 2359 / DSM 70799 / NBRC 1267 / NRRL Y-1140 / WM37) (Yeast).